A 233-amino-acid chain; its full sequence is 2-C-methyl-D-erythritol 4-phosphate cytidylyltransferase (233 aa).

Belongs to the IspD/TarI cytidylyltransferase family. IspD subfamily.

The enzyme catalyses 2-C-methyl-D-erythritol 4-phosphate + CTP + H(+) = 4-CDP-2-C-methyl-D-erythritol + diphosphate. Its pathway is isoprenoid biosynthesis; isopentenyl diphosphate biosynthesis via DXP pathway; isopentenyl diphosphate from 1-deoxy-D-xylulose 5-phosphate: step 2/6. Its function is as follows. Catalyzes the formation of 4-diphosphocytidyl-2-C-methyl-D-erythritol from CTP and 2-C-methyl-D-erythritol 4-phosphate (MEP). This Nitrosomonas eutropha (strain DSM 101675 / C91 / Nm57) protein is 2-C-methyl-D-erythritol 4-phosphate cytidylyltransferase.